Here is a 201-residue protein sequence, read N- to C-terminus: tRNA (guanine-N(7)-)-methyltransferase (201 aa).

S-adenosyl-L-methionine contacts are provided by glutamate 33, glutamate 58, aspartate 85, and aspartate 108. Aspartate 108 is a catalytic residue. Residues lysine 112 and aspartate 144 each coordinate substrate.

The protein belongs to the class I-like SAM-binding methyltransferase superfamily. TrmB family.

The enzyme catalyses guanosine(46) in tRNA + S-adenosyl-L-methionine = N(7)-methylguanosine(46) in tRNA + S-adenosyl-L-homocysteine. The protein operates within tRNA modification; N(7)-methylguanine-tRNA biosynthesis. Catalyzes the formation of N(7)-methylguanine at position 46 (m7G46) in tRNA. The polypeptide is tRNA (guanine-N(7)-)-methyltransferase (Anaeromyxobacter dehalogenans (strain 2CP-C)).